Here is a 395-residue protein sequence, read N- to C-terminus: Chorismate synthase (395 aa).

Arginine 40 and arginine 46 together coordinate NADP(+). FMN is bound by residues 137–139, glycine 308, 323–327, and arginine 349; these read RSS and KPLPT.

It belongs to the chorismate synthase family. As to quaternary structure, homotetramer. The cofactor is FMNH2.

It carries out the reaction 5-O-(1-carboxyvinyl)-3-phosphoshikimate = chorismate + phosphate. The protein operates within metabolic intermediate biosynthesis; chorismate biosynthesis; chorismate from D-erythrose 4-phosphate and phosphoenolpyruvate: step 7/7. Its function is as follows. Catalyzes the anti-1,4-elimination of the C-3 phosphate and the C-6 proR hydrogen from 5-enolpyruvylshikimate-3-phosphate (EPSP) to yield chorismate, which is the branch point compound that serves as the starting substrate for the three terminal pathways of aromatic amino acid biosynthesis. This reaction introduces a second double bond into the aromatic ring system. In Gloeobacter violaceus (strain ATCC 29082 / PCC 7421), this protein is Chorismate synthase.